The sequence spans 329 residues: Ribosomal RNA small subunit methyltransferase H (329 aa).

Residues 39–41, Asp56, Phe85, Asp106, and Gln113 contribute to the S-adenosyl-L-methionine site; that span reads GGY. The tract at residues 289–308 is disordered; sequence SGAIRPTPEEEARNPRARSA.

The protein belongs to the methyltransferase superfamily. RsmH family.

The protein resides in the cytoplasm. The enzyme catalyses cytidine(1402) in 16S rRNA + S-adenosyl-L-methionine = N(4)-methylcytidine(1402) in 16S rRNA + S-adenosyl-L-homocysteine + H(+). Functionally, specifically methylates the N4 position of cytidine in position 1402 (C1402) of 16S rRNA. This is Ribosomal RNA small subunit methyltransferase H from Novosphingobium aromaticivorans (strain ATCC 700278 / DSM 12444 / CCUG 56034 / CIP 105152 / NBRC 16084 / F199).